Here is a 453-residue protein sequence, read N- to C-terminus: Bifunctional protein GlmU (453 aa).

A pyrophosphorylase region spans residues M1 to R226. UDP-N-acetyl-alpha-D-glucosamine contacts are provided by residues L7–G10, K21, Q72, G77–T78, Y99–D101, G136, E151, N166, and N224. D101 is a binding site for Mg(2+). N224 serves as a coordination point for Mg(2+). Positions Q227–A247 are linker. The tract at residues G248–S453 is N-acetyltransferase. R330 and K348 together coordinate UDP-N-acetyl-alpha-D-glucosamine. The active-site Proton acceptor is the H360. UDP-N-acetyl-alpha-D-glucosamine contacts are provided by Y363 and N374. Acetyl-CoA-binding positions include A377, N383–Y384, S402, A420, and R437.

The protein in the N-terminal section; belongs to the N-acetylglucosamine-1-phosphate uridyltransferase family. In the C-terminal section; belongs to the transferase hexapeptide repeat family. Homotrimer. Requires Mg(2+) as cofactor.

The protein localises to the cytoplasm. It carries out the reaction alpha-D-glucosamine 1-phosphate + acetyl-CoA = N-acetyl-alpha-D-glucosamine 1-phosphate + CoA + H(+). It catalyses the reaction N-acetyl-alpha-D-glucosamine 1-phosphate + UTP + H(+) = UDP-N-acetyl-alpha-D-glucosamine + diphosphate. Its pathway is nucleotide-sugar biosynthesis; UDP-N-acetyl-alpha-D-glucosamine biosynthesis; N-acetyl-alpha-D-glucosamine 1-phosphate from alpha-D-glucosamine 6-phosphate (route II): step 2/2. It functions in the pathway nucleotide-sugar biosynthesis; UDP-N-acetyl-alpha-D-glucosamine biosynthesis; UDP-N-acetyl-alpha-D-glucosamine from N-acetyl-alpha-D-glucosamine 1-phosphate: step 1/1. The protein operates within bacterial outer membrane biogenesis; LPS lipid A biosynthesis. Catalyzes the last two sequential reactions in the de novo biosynthetic pathway for UDP-N-acetylglucosamine (UDP-GlcNAc). The C-terminal domain catalyzes the transfer of acetyl group from acetyl coenzyme A to glucosamine-1-phosphate (GlcN-1-P) to produce N-acetylglucosamine-1-phosphate (GlcNAc-1-P), which is converted into UDP-GlcNAc by the transfer of uridine 5-monophosphate (from uridine 5-triphosphate), a reaction catalyzed by the N-terminal domain. This chain is Bifunctional protein GlmU, found in Cellvibrio japonicus (strain Ueda107) (Pseudomonas fluorescens subsp. cellulosa).